The chain runs to 616 residues: Cleavage stimulation factor subunit 2 tau variant (616 aa).

Residues 16–94 (RSVFVGNIPY…RALRVDNAAS (79 aa)) enclose the RRM domain. Disordered stretches follow at residues 203–241 (GKSQSVSVSGPGPGPGPGLCPGPNVLLNQQNPPAPQPQH) and 262–418 (IPAP…SRAM). Composition is skewed to low complexity over residues 223-233 (PGPNVLLNQQN) and 319-331 (VTPGGLPPRGLLG). T320 carries the post-translational modification Phosphothreonine. Residues 368–381 (SGHDTRGPSSHEMR) show a composition bias toward basic and acidic residues. The 1-1 repeat unit spans residues 418 to 422 (METRA). Residues 418-462 (METRAMETEVLETRVMERRGMETCAMETRGMEARGMDARGLEMRG) form a 9 X 5 AA tandem repeats of M-E-T-R-[AG] region. The stretch at 423-427 (METEV) is one 1-2; approximate repeat. The stretch at 428 to 432 (LETRV) is one 1-3; approximate repeat. One copy of the 1-4; approximate repeat lies at 433 to 437 (MERRG). A 1-5; approximate repeat occupies 438–442 (METCA). The stretch at 443 to 447 (METRG) is one 1-6 repeat. The stretch at 448-452 (MEARG) is one 1-7; approximate repeat. The stretch at 453-457 (MDARG) is one 1-8; approximate repeat. The 1-9; approximate repeat unit spans residues 458–462 (LEMRG). 4 repeat units span residues 505–509 (GAGMQ), 510–514 (GTGIQ), 515–519 (GTGMQ), and 520–524 (GAGIQ). Residues 505 to 549 (GAGMQGTGIQGTGMQGAGIQGGGMQGAGIQGVSIQGGGIQGGGIQ) are 9 X 5 AA tandem repeats of G-[AT]-G-[MI]-Q. One copy of the 2-5; approximate repeat lies at 525–529 (GGGMQ). One copy of the 2-6 repeat lies at 530 to 534 (GAGIQ). A 2-7; approximate repeat occupies 535-539 (GVSIQ). Residues 540–544 (GGGIQ) form a 2-8; approximate repeat. Positions 542–573 (GIQGGGIQGASKQGGSQPSSFSPGQSQVTPQD) are disordered. A 2-9; approximate repeat occupies 545–549 (GGGIQ). The segment covering 550–568 (GASKQGGSQPSSFSPGQSQ) has biased composition (low complexity). Position 563 is a phosphoserine (S563).

Its subcellular location is the nucleus. In terms of biological role, may play a significant role in AAUAAA-independent mRNA polyadenylation in germ cells. Directly involved in the binding to pre-mRNAs. This Homo sapiens (Human) protein is Cleavage stimulation factor subunit 2 tau variant (CSTF2T).